A 755-amino-acid chain; its full sequence is Protein MTSS 1 (755 aa).

An IMD domain is found at 1–250; it reads MEAVIEKECS…EQVILDLKGS (250 aa). A coiled-coil region spans residues 108–155; the sequence is LQEQMEEWKKVANQLDKDHAKEYKKARQEIKKKSSDTLKLQKKAKKGR. Disordered regions lie at residues 139–159 and 255–305; these read KKSS…GDIQ and SYQT…RSSN. T258 is modified (phosphothreonine). 4 positions are modified to phosphoserine: S261, S262, S271, and S322. Positions 327–351 are disordered; sequence QDAFQSKSPSPMPPEAPNQLSNGFS. T425 is subject to Phosphothreonine. Disordered regions lie at residues 428 to 470, 490 to 513, and 563 to 755; these read RRKE…TRPG, DTQR…TTPC, and QAKR…PRFS. Residues 443 to 453 show a composition bias toward low complexity; sequence TTASGPPAAAE. T603 carries the post-translational modification Phosphothreonine. Residues 608 to 623 show a composition bias toward low complexity; sequence PIPIKTPVIPVKTPTV. Residues S644 and S647 each carry the phosphoserine modification. Polar residues predominate over residues 656–671; sequence GVTSMPSSMWSGQASV. Positions 727–744 constitute a WH2 domain; the sequence is QGEDMLNAIRRGVKLKKT.

Belongs to the MTSS family. As to quaternary structure, binds to actin. Binds to the cytoplasmic domain of receptor protein tyrosine phosphatase delta. As to expression, expressed in many tissues, including spleen, thymus, prostate, testis, uterus, colon, and peripheral blood.

It localises to the cytoplasm. The protein localises to the cytoskeleton. Functionally, may be related to cancer progression or tumor metastasis in a variety of organ sites, most likely through an interaction with the actin cytoskeleton. This is Protein MTSS 1 from Homo sapiens (Human).